We begin with the raw amino-acid sequence, 91 residues long: Small ribosomal subunit protein uS15c (91 aa).

This sequence belongs to the universal ribosomal protein uS15 family. In terms of assembly, part of the 30S ribosomal subunit.

Its subcellular location is the plastid. It localises to the chloroplast. The chain is Small ribosomal subunit protein uS15c (rps15) from Eucalyptus globulus subsp. globulus (Tasmanian blue gum).